We begin with the raw amino-acid sequence, 331 residues long: NmrA-like family domain-containing oxidoreductase himF (331 aa).

NADP(+)-binding positions include 8 to 13 (GATGNQ), 34 to 38 (RNAES), 55 to 56 (DG), 76 to 78 (TNG), lysine 133, and 155 to 167 (WFFETFLEPQMAA).

It belongs to the NmrA-type oxidoreductase family.

It functions in the pathway secondary metabolite biosynthesis. NmrA-like family domain-containing oxidoreductase; part of the him gene cluster that mediates the biosynthesis of himeic acid A, a ubiquitin-activating enzyme (E1) inhibitor. First, himA, together with the trans-enoyl reductase himH, catalyzes the formation of apolyketide chain, which is then condensed with leucine by the NRPS activity of himA. Dieckmann cyclization and release from himA gives a tetramic acid intermediate as the product of himA PKS-NRPS. HimG then catalyzes alpha-oxidation of the tetramic acid ring, with a subsequent rearrangement to yield apyrone intermediate. Two terminal methyl groups of polyketide and amide side chains are oxidized to carboxylic acids by himC cytochrome P450 monooxygenase to form himeic acid A. Himeic acid A is further converted to himeic acid B and C during culture growth. No gene responsible for pyrone to pyridone conversion was found in the him gene cluster and himeic acid A is non-enzymatically converted to himeic acid C by the incorporation of an ammonium nitrogen atom in a pH5 buffer, and to himeic acid B at a conversion ratio of 50% during incubation in MeOH for 5 days. The protein is NmrA-like family domain-containing oxidoreductase himF of Aspergillus japonicus.